We begin with the raw amino-acid sequence, 263 residues long: Endonuclease 8 (263 aa).

The active-site Schiff-base intermediate with DNA is the Pro2. The active-site Proton donor is Glu3. Lys53 serves as the catalytic Proton donor; for beta-elimination activity. DNA-binding residues include Gln70, Arg125, and Asn169. The segment at 229–263 adopts an FPG-type zinc-finger fold; that stretch reads KLFHRDGEACERCGGIIEKTTLSSRPFYWCPHCQK. The active-site Proton donor; for delta-elimination activity is Arg253.

Belongs to the FPG family. Zn(2+) serves as cofactor.

It catalyses the reaction 2'-deoxyribonucleotide-(2'-deoxyribose 5'-phosphate)-2'-deoxyribonucleotide-DNA = a 3'-end 2'-deoxyribonucleotide-(2,3-dehydro-2,3-deoxyribose 5'-phosphate)-DNA + a 5'-end 5'-phospho-2'-deoxyribonucleoside-DNA + H(+). Involved in base excision repair of DNA damaged by oxidation or by mutagenic agents. Acts as a DNA glycosylase that recognizes and removes damaged bases. Has a preference for oxidized pyrimidines, such as thymine glycol, 5,6-dihydrouracil and 5,6-dihydrothymine. Has AP (apurinic/apyrimidinic) lyase activity and introduces nicks in the DNA strand. Cleaves the DNA backbone by beta-delta elimination to generate a single-strand break at the site of the removed base with both 3'- and 5'-phosphates. The polypeptide is Endonuclease 8 (Salmonella typhimurium (strain SL1344)).